Here is a 166-residue protein sequence, read N- to C-terminus: NSNIDKIPFHPYFTFKDIVGFIVMIFLLISLVLINPNLLGDPDNFIPANPLVTPAHIQPEWYFLFAYAILRSIPNKLGGVIALVLSIAILMILPFYNLSKFRGIQFYPINQILFWIMLVTVILLTWIGARPVEEPYVLLGQILTVIYFLYYLINPLVSKWWDNLLN.

4 consecutive transmembrane segments (helical) span residues 15 to 35 (FKDI…VLIN), 77 to 97 (LGGV…PFYN), 109 to 129 (INQI…WIGA), and 136 to 156 (YVLL…INPL).

It belongs to the cytochrome b family. As to quaternary structure, the main subunits of complex b-c1 are: cytochrome b, cytochrome c1 and the Rieske protein. The cofactor is heme.

Its subcellular location is the mitochondrion inner membrane. Its function is as follows. Component of the ubiquinol-cytochrome c reductase complex (complex III or cytochrome b-c1 complex) that is part of the mitochondrial respiratory chain. The b-c1 complex mediates electron transfer from ubiquinol to cytochrome c. Contributes to the generation of a proton gradient across the mitochondrial membrane that is then used for ATP synthesis. The protein is Cytochrome b (mt:Cyt-b) of Drosophila subobscura (Fruit fly).